Here is a 148-residue protein sequence, read N- to C-terminus: HTH-type transcriptional regulator Rv2324 (148 aa).

One can recognise an HTH asnC-type domain in the interval 4–65 (LDDTDERILA…VVDRNALGWN (62 aa)). The H-T-H motif DNA-binding region spans 23–42 (FAEIGHKVSLSAPAVKRRVD).

In terms of assembly, homodimer. Forms oligomers.

The DNA-binding activity of Rv2324 is modulated by interaction of Rv2324 with amino acids. Aspartate is the only effector amino acid that completely abolishes DNA binding. The majority of amino acids induce a dimer-tetramer or dimer-hexamer oligomeric transition. In response to amino-acid binding, adopts an open quaternary association, which is a part of the functional requirement to bind to non-symmetrically distributed target DNA binding sites. Functionally, transcriptional regulator involved in growth, DNA replication and damage control. Plays a crucial role in regulating survival and growth of M.tuberculosis. Could function as a global regulator in both the latent/persistent and active phases of growth. Binds to its own promoter region and to promoters of multiple metabolic genes, such as serB2, lat, ald and roc operon. In vitro, interacts with intrinsically curved and non-curved DNA molecules, and with both supercoiled and linear DNA, with higher affinity for supercoiled DNA. Binds to DNA recombination, replication and repair intermediates. The sequence is that of HTH-type transcriptional regulator Rv2324 from Mycobacterium tuberculosis (strain ATCC 25618 / H37Rv).